A 605-amino-acid chain; its full sequence is MKHGETDSYWGGIIKSMGLVFGDIGTSPIYTLTVIIALTKPTQDNILGIISLIVWTLIILVHLEYAVLAMSLSRKGEGGEIVLREILVRMIKPGRQMAFVTFLTYLGVALLMGDGVITPAISILSAVEGTLLIPGLGGLSQNTLILIAGTIALFLFVFQYKGTDKVARAFGPIMVLWFAALALSGAISVSSHPGILAAISPHHAISFLMHNGLPGFFVLSEVILCATGGEALYADMGHLGRKPVKRAWYFVFVALVINYLGQGAFIITHPDAKNILFGMLQYQAPLFYIPFLILTILATIIASQALISGVFSIVYQGINTRMLPLLKVDYTSNQLKSQIYIGSVNWLLLCLVILIMLVFRKSANLAAAYGFAVTGTMVITGIMMTMIFSRTTKKWKVPLALFVTLVDVVFLVSNCNKLPHGGYWSLILASVPLAVILIWTRGQRGLYLALRPLDLETYLLSYEQIYKKGRIAGTGLFFVKEWNIIPPYLVHCTIRSNIVYERNVLISIVRTDEPFGVESVLECGIGTGLDGFMIKAGYMEIFDIELLLKQNGIQEKVIFYGIEDIATTNPIWRVFSVIKKLTPNFVQFNKVPAAKLQGVITRVEM.

Helical transmembrane passes span 18–38 (GLVFGDIGTSPIYTLTVIIAL), 46–66 (ILGIISLIVWTLIILVHLEYA), 97–117 (MAFVTFLTYLGVALLMGDGVI), 138–158 (GLSQNTLILIAGTIALFLFVF), 169–189 (AFGPIMVLWFAALALSGAISV), 204–224 (AISFLMHNGLPGFFVLSEVIL), 247–267 (AWYFVFVALVINYLGQGAFII), 287–307 (FYIPFLILTILATIIASQALI), 339–359 (IYIGSVNWLLLCLVILIMLVF), 368–388 (AYGFAVTGTMVITGIMMTMIF), 395–415 (WKVPLALFVTLVDVVFLVSNC), and 418–438 (LPHGGYWSLILASVPLAVILI).

This sequence belongs to the HAK/KUP transporter (TC 2.A.72) family.

The protein localises to the cell inner membrane. The enzyme catalyses K(+)(in) + H(+)(in) = K(+)(out) + H(+)(out). Transport of potassium into the cell. Likely operates as a K(+):H(+) symporter. The chain is Probable potassium transport system protein Kup from Pelobacter propionicus (strain DSM 2379 / NBRC 103807 / OttBd1).